Consider the following 855-residue polypeptide: MASKLSFKRMDSIAETMPDALRQSRYQMKRCFQRYVSKGKRLLKNQQLMEELEKSLDDKVENEKLVEGFLGYIICSTQEAVVLPPFVAFAVRMNPGIWEYVKVHSDDLSVEGITPSEYLKFKETLYDEKWAKDDNSLEVDFGALDLSTPHLTLPSSIGNGLQFVSKFMSSKLGGKPESMKPLLDYLLTLNYRGEKLMINDTIDTVSKLQTALLLAEVFVSGLPKYTPYLKFEQRFQEWGLEKGWGDTAERCKETLNCLSEVLQAPDPTNMEKFFSRVPSIFNIVIFSIHGYFGQEKVLGLPDTGGQVVYILDQVRAMEEELLQRIKQQGLHVTPKILVLTRLIPDAKGTKCNVELEPVENTKYSHILRVPFKTEDGKDLRQWVSRFDIYPYLERYAQNSCAKILDILEGKPDLIIGNYTDGNLVASLLSNKLCVTQGTIAHALEKTKYEDSDVKWREMDQKYHFSCQFTADMISMNTSDFIITSTYQEIAGSKEKPGQYEHHYAFTMPGLCRYATGINVFDPKFNIAAPGADQSIYFPFTQKQKRLTDLHPQIDELLYSKDDTDEHIGYLADRNKPIIFSMARLDKVKNITGLVEWYGQNKKLRDLVNLVVVAGLLDASQSKDREEIEEINKMHNLMDRYQLKGQIRWIKAQTDRVRNGELYRCIADTKGAFVQPALYEAFGLTVIEAMNCGLPTFATNQGGPAEIIIDGVSGFHVNPINGREAGIKIADFFQKCKEDPSYWNKVSTAGLQRIYECYTWKIYATRVLNMGSTYSFWKTLNKEERQAKQRYLQIFYNVQYRNLAKAVARAGDQQARQTTTGVAPSEIVVRPKERKPQTRMQRILTRLAGQKPPVSE.

A GT-B glycosyltransferase region spans residues 279–758 (SIFNIVIFSI…GLQRIYECYT (480 aa)).

The protein belongs to the glycosyltransferase 1 family. Plant sucrose synthase subfamily. As to expression, predominantly expressed in roots, flowers and immature seeds.

The protein resides in the cytoplasm. It is found in the membrane. It carries out the reaction an NDP-alpha-D-glucose + D-fructose = a ribonucleoside 5'-diphosphate + sucrose + H(+). Its function is as follows. Sucrose-cleaving enzyme that provides UDP-glucose and fructose for various metabolic pathways. This Oryza sativa subsp. japonica (Rice) protein is Sucrose synthase 7 (SUS7).